The sequence spans 372 residues: tRNA-specific 2-thiouridylase MnmA (372 aa).

ATP contacts are provided by residues 11–18 (GLSGGVDS) and methionine 36. The tract at residues 106–108 (NPD) is interaction with target base in tRNA. Cysteine 111 (nucleophile) is an active-site residue. Residues cysteine 111 and cysteine 204 are joined by a disulfide bond. An ATP-binding site is contributed by glycine 136. The tract at residues 154–156 (KDQ) is interaction with tRNA. The Cysteine persulfide intermediate role is filled by cysteine 204. The tract at residues 311–312 (RY) is interaction with tRNA.

It belongs to the MnmA/TRMU family.

It is found in the cytoplasm. The enzyme catalyses S-sulfanyl-L-cysteinyl-[protein] + uridine(34) in tRNA + AH2 + ATP = 2-thiouridine(34) in tRNA + L-cysteinyl-[protein] + A + AMP + diphosphate + H(+). In terms of biological role, catalyzes the 2-thiolation of uridine at the wobble position (U34) of tRNA, leading to the formation of s(2)U34. The chain is tRNA-specific 2-thiouridylase MnmA from Mycoplasmopsis synoviae (strain 53) (Mycoplasma synoviae).